A 615-amino-acid polypeptide reads, in one-letter code: MFS-type transporter 1 (615 aa).

Positions 1–85 (MTALAAVPDL…GNNVSPHGRH (85 aa)) are disordered. Over residues 16–53 (PSTTTVHSPNYSGSPADISSSPTTRAVSRNTARQTASA) the composition is skewed to polar residues. A glycan (N-linked (GlcNAc...) asparagine) is linked at Asn-25. A run of 6 helical transmembrane segments spans residues 94 to 114 (CLVI…SGIL), 138 to 158 (VYSL…HIIG), 162 to 182 (VWIT…RSAT), 192 to 212 (VLGV…TNGF), 222 to 242 (FAFQ…LGGI), and 251 to 271 (FGFY…LVVL). N-linked (GlcNAc...) asparagine glycosylation is present at Asn-302. Helical transmembrane passes span 320 to 340 (WTGT…FSVV), 351 to 371 (QNIA…LWVG), 397 to 417 (AAVF…ALYF), 432 to 452 (FLPM…LVET), 455 to 475 (VRWL…IMAL), 488 to 508 (FAML…NLII), 522 to 542 (AVFN…TAVV), and 585 to 605 (AAFW…FLGL).

The protein belongs to the major facilitator superfamily. EmrB family.

Its subcellular location is the membrane. In terms of biological role, MFS-type transporter; part of the gene cluster that mediates the biosynthesis of pyriculol and pyriculariol, two heptaketides that induce lesion formation upon application on rice leaves but are dispensable for pathogenicity. With the ABC transporter ABC7, is most likely responsible for pyriculol and pyriculariol secretion and thereby may contribute to intrinsic resistance. In Pyricularia oryzae (strain 70-15 / ATCC MYA-4617 / FGSC 8958) (Rice blast fungus), this protein is MFS-type transporter 1.